We begin with the raw amino-acid sequence, 1044 residues long: Protein ITPRID1 (1044 aa).

Over residues Met1–Glu14 the composition is skewed to polar residues. 4 disordered regions span residues Met1–Lys20, Glu230–Arg251, Met388–Glu489, and Pro583–Asp607. The span at Met388–Thr398 shows a compositional bias: acidic residues. Polar residues-rich tracts occupy residues His460–Gln469 and Arg480–Glu489. The stretch at Ser896–Glu937 forms a coiled coil.

This chain is Protein ITPRID1, found in Homo sapiens (Human).